Here is a 182-residue protein sequence, read N- to C-terminus: Peptidyl-tRNA hydrolase (182 aa).

Tyr-14 is a tRNA binding site. Catalysis depends on His-19, which acts as the Proton acceptor. The tRNA site is built by Phe-64, Asn-66, and Asn-112.

Belongs to the PTH family. In terms of assembly, monomer.

The protein localises to the cytoplasm. The enzyme catalyses an N-acyl-L-alpha-aminoacyl-tRNA + H2O = an N-acyl-L-amino acid + a tRNA + H(+). Hydrolyzes ribosome-free peptidyl-tRNAs (with 1 or more amino acids incorporated), which drop off the ribosome during protein synthesis, or as a result of ribosome stalling. In terms of biological role, catalyzes the release of premature peptidyl moieties from peptidyl-tRNA molecules trapped in stalled 50S ribosomal subunits, and thus maintains levels of free tRNAs and 50S ribosomes. This is Peptidyl-tRNA hydrolase from Wolbachia sp. subsp. Drosophila simulans (strain wRi).